A 232-amino-acid chain; its full sequence is MENQPKLNSSKEVIAFLAERFPHCFSAEGEARPLKIGIFQDLVDRVAGEMNLSKTQLRSALRLYTSSWRYLYGVKPGATRVDLDGNPCGELDEQHVEHARKQLEEAKARVQAQRAEQQAKKREAAAAAGEKEDAPRRERKPRPTTPRRKEGAERKPRAQKSVEKAPKTVKAPREEQHTPVSDISALTVGQALKVKAGQNAMDATVLEITKDGVRVQLNSGMSLIVRAEHLVF.

Residues 105–182 (EAKARVQAQR…REEQHTPVSD (78 aa)) are disordered. Residues 117–136 (QQAKKREAAAAAGEKEDAPR) show a composition bias toward basic and acidic residues. The segment covering 137-146 (RERKPRPTTP) has biased composition (basic residues). Residues 147–177 (RRKEGAERKPRAQKSVEKAPKTVKAPREEQH) show a composition bias toward basic and acidic residues.

Belongs to the ProQ family.

The protein localises to the cytoplasm. RNA chaperone with significant RNA binding, RNA strand exchange and RNA duplexing activities. May regulate ProP activity through an RNA-based, post-transcriptional mechanism. In Escherichia coli O7:K1 (strain IAI39 / ExPEC), this protein is RNA chaperone ProQ.